Reading from the N-terminus, the 119-residue chain is Ribonuclease P protein component (119 aa).

The protein belongs to the RnpA family. In terms of assembly, consists of a catalytic RNA component (M1 or rnpB) and a protein subunit.

It carries out the reaction Endonucleolytic cleavage of RNA, removing 5'-extranucleotides from tRNA precursor.. In terms of biological role, RNaseP catalyzes the removal of the 5'-leader sequence from pre-tRNA to produce the mature 5'-terminus. It can also cleave other RNA substrates such as 4.5S RNA. The protein component plays an auxiliary but essential role in vivo by binding to the 5'-leader sequence and broadening the substrate specificity of the ribozyme. This chain is Ribonuclease P protein component, found in Aeromonas hydrophila subsp. hydrophila (strain ATCC 7966 / DSM 30187 / BCRC 13018 / CCUG 14551 / JCM 1027 / KCTC 2358 / NCIMB 9240 / NCTC 8049).